Here is a 320-residue protein sequence, read N- to C-terminus: Methionyl-tRNA formyltransferase (320 aa).

114–117 (SLLP) is a binding site for (6S)-5,6,7,8-tetrahydrofolate.

It belongs to the Fmt family.

The catalysed reaction is L-methionyl-tRNA(fMet) + (6R)-10-formyltetrahydrofolate = N-formyl-L-methionyl-tRNA(fMet) + (6S)-5,6,7,8-tetrahydrofolate + H(+). Functionally, attaches a formyl group to the free amino group of methionyl-tRNA(fMet). The formyl group appears to play a dual role in the initiator identity of N-formylmethionyl-tRNA by promoting its recognition by IF2 and preventing the misappropriation of this tRNA by the elongation apparatus. In Acinetobacter baumannii (strain ACICU), this protein is Methionyl-tRNA formyltransferase.